Here is a 334-residue protein sequence, read N- to C-terminus: Phosphoribosylformylglycinamidine cyclo-ligase (334 aa).

The protein belongs to the AIR synthase family.

It localises to the cytoplasm. It carries out the reaction 2-formamido-N(1)-(5-O-phospho-beta-D-ribosyl)acetamidine + ATP = 5-amino-1-(5-phospho-beta-D-ribosyl)imidazole + ADP + phosphate + H(+). It participates in purine metabolism; IMP biosynthesis via de novo pathway; 5-amino-1-(5-phospho-D-ribosyl)imidazole from N(2)-formyl-N(1)-(5-phospho-D-ribosyl)glycinamide: step 2/2. This chain is Phosphoribosylformylglycinamidine cyclo-ligase, found in Pyrococcus abyssi (strain GE5 / Orsay).